The following is a 154-amino-acid chain: MYRMQLLSCIALSLALVTNSAPTSRSTKKTQLQLEHLLLDLQMILNGINNYKNPKLTRMLTFKFYMPKKATELKHLQCLEEELKPLEEVLNLAQSKNFHLRDTKDLISNINVIVLELKGSETTLMCEYADETATIVEFLNRWITFCQSIISTLT.

An N-terminal signal peptide occupies residues 1–20; sequence MYRMQLLSCIALSLALVTNS. Thr-23 is a glycosylation site (O-linked (GalNAc...) threonine). A disulfide bond links Cys-78 and Cys-126.

It belongs to the IL-2 family.

It is found in the secreted. Functionally, cytokine produced by activated CD4-positive helper T-cells and to a lesser extend activated CD8-positive T-cells and natural killer (NK) cells that plays pivotal roles in the immune response and tolerance. Binds to a receptor complex composed of either the high-affinity trimeric IL-2R (IL2RA/CD25, IL2RB/CD122 and IL2RG/CD132) or the low-affinity dimeric IL-2R (IL2RB and IL2RG). Interaction with the receptor leads to oligomerization and conformation changes in the IL-2R subunits resulting in downstream signaling starting with phosphorylation of JAK1 and JAK3. In turn, JAK1 and JAK3 phosphorylate the receptor to form a docking site leading to the phosphorylation of several substrates including STAT5. This process leads to activation of several pathways including STAT, phosphoinositide-3-kinase/PI3K and mitogen-activated protein kinase/MAPK pathways. Functions as a T-cell growth factor and can increase NK-cell cytolytic activity as well. Promotes strong proliferation of activated B-cells and subsequently immunoglobulin production. Plays a pivotal role in regulating the adaptive immune system by controlling the survival and proliferation of regulatory T-cells, which are required for the maintenance of immune tolerance. Moreover, participates in the differentiation and homeostasis of effector T-cell subsets, including Th1, Th2, Th17 as well as memory CD8-positive T-cells. The protein is Interleukin-2 (IL2) of Cercocebus atys (Sooty mangabey).